The sequence spans 251 residues: Hydroxyacylglutathione hydrolase (251 aa).

7 residues coordinate Zn(2+): His-53, His-55, Asp-57, His-58, His-110, Asp-127, and His-165.

It belongs to the metallo-beta-lactamase superfamily. Glyoxalase II family. Monomer. Zn(2+) serves as cofactor.

It catalyses the reaction an S-(2-hydroxyacyl)glutathione + H2O = a 2-hydroxy carboxylate + glutathione + H(+). Its pathway is secondary metabolite metabolism; methylglyoxal degradation; (R)-lactate from methylglyoxal: step 2/2. Functionally, thiolesterase that catalyzes the hydrolysis of S-D-lactoyl-glutathione to form glutathione and D-lactic acid. This is Hydroxyacylglutathione hydrolase from Pectobacterium atrosepticum (strain SCRI 1043 / ATCC BAA-672) (Erwinia carotovora subsp. atroseptica).